The chain runs to 531 residues: RCC1 and BTB domain-containing protein 1 (531 aa).

6 RCC1 repeats span residues Asn-40–Thr-91, Asp-93–Ala-145, Gly-147–Asp-198, Ser-199–Asp-250, Gly-252–Thr-302, and Gly-304–Val-356. BTB domains are found at residues Ala-370–Pro-437 and Glu-470–Leu-499.

In terms of tissue distribution, in the retina, mainly expressed in the inner retina with strong signals reaching up to the outer plexiform layer (at protein level).

It is found in the nucleus. In terms of biological role, may be involved in cell cycle regulation by chromatin remodeling. This Mus musculus (Mouse) protein is RCC1 and BTB domain-containing protein 1 (Rcbtb1).